Reading from the N-terminus, the 193-residue chain is LOB domain-containing protein 12 (193 aa).

The LOB domain occupies 7–108 (SPCASCKLLR…MQLAVAQAEI (102 aa)).

It belongs to the LOB domain-containing protein family. Expressed predominantly in roots, and at low levels in shoots, floral stems and open flowers.

This chain is LOB domain-containing protein 12 (LBD12), found in Arabidopsis thaliana (Mouse-ear cress).